A 626-amino-acid chain; its full sequence is Methanol dehydrogenase [cytochrome c] subunit 1 (626 aa).

An N-terminal signal peptide occupies residues 1-27 (MSRFVTSVSALAMLALAPAALSSVAYA). A disulfide bridge links cysteine 130 with cysteine 131. Residues glutamate 204 and asparagine 288 each contribute to the Ca(2+) site. Residue aspartate 330 is the Proton acceptor of the active site. Cysteines 413 and 442 form a disulfide.

Belongs to the bacterial PQQ dehydrogenase family. In terms of assembly, heterotetramer composed of 2 alpha and 2 beta subunits. Pyrroloquinoline quinone is required as a cofactor. Requires Ca(2+) as cofactor.

It localises to the cell inner membrane. It carries out the reaction 2 Fe(III)-[cytochrome cL] + a primary alcohol = 2 Fe(II)-[cytochrome cL] + an aldehyde + 2 H(+). In terms of biological role, catalyzes the oxidation of primary alcohols including methanol. The polypeptide is Methanol dehydrogenase [cytochrome c] subunit 1 (moxF) (Methylobacterium organophilum).